A 581-amino-acid chain; its full sequence is FAD-dependent monooxygenase DEP4 (581 aa).

Position 43–46 (43–46 (VWSK)) interacts with FAD. Residue 54-56 (FAQ) participates in NADP(+) binding. Valine 108 is an FAD binding site. Residues 183–202 (VGRS…EGKR), 219–220 (AP), and 351–352 (DI) each bind NADP(+). Residue methionine 470 participates in FAD binding.

The protein belongs to the FAD-binding monooxygenase family. FAD is required as a cofactor.

The protein operates within polyketide biosynthesis. Functionally, FAD-dependent monooxygenase; part of the gene cluster that mediates the biosynthesis of depudecin, a highly oxidized eleven-carbon linear polyketide that acts as a histone deacetylase (HDAC) inhibitor and makes a small contribution to pathogenesis. The reducing polyketide synthase DEP5 is the central enzyme in depudecin biosynthesis by yielding the backbone polyketide chain. The monooxygenases DEP2 and DEP4, as well as the uncharacterized protein DEP1, then act as tailoring enzymes to modify the intermediate polyketide chain into depudecin. The sequence is that of FAD-dependent monooxygenase DEP4 from Alternaria brassicicola (Dark leaf spot agent).